The sequence spans 139 residues: Ribulose bisphosphate carboxylase small subunit (139 aa).

The protein belongs to the RuBisCO small chain family. In terms of assembly, heterohexadecamer of 8 large and 8 small subunits.

The protein resides in the plastid. It is found in the chloroplast. RuBisCO catalyzes two reactions: the carboxylation of D-ribulose 1,5-bisphosphate, the primary event in carbon dioxide fixation, as well as the oxidative fragmentation of the pentose substrate in the photorespiration process. Both reactions occur simultaneously and in competition at the same active site. Although the small subunit is not catalytic it is essential for maximal activity. The sequence is that of Ribulose bisphosphate carboxylase small subunit from Olisthodiscus luteus (Marine phytoflagellate).